The chain runs to 252 residues: uncharacterized protein (252 aa).

The first 22 residues, 1-22 (MIHSKRLRLWLYLVLLAVFISA), serve as a signal peptide directing secretion. The N-palmitoyl cysteine moiety is linked to residue Cys23. Cys23 carries S-diacylglycerol cysteine lipidation.

Belongs to the staphylococcal tandem lipoprotein family.

The protein localises to the cell membrane. This is an uncharacterized protein from Staphylococcus aureus (strain MW2).